The following is a 92-amino-acid chain: Large ribosomal subunit protein bL25 (92 aa).

The protein belongs to the bacterial ribosomal protein bL25 family. Part of the 50S ribosomal subunit; part of the 5S rRNA/L5/L18/L25 subcomplex. Contacts the 5S rRNA. Binds to the 5S rRNA independently of L5 and L18.

This is one of the proteins that binds to the 5S RNA in the ribosome where it forms part of the central protuberance. The sequence is that of Large ribosomal subunit protein bL25 from Photobacterium damsela subsp. piscicida (Pasteurella piscicida).